Reading from the N-terminus, the 331-residue chain is Major ferric iron-binding protein (331 aa).

An N-terminal signal peptide occupies residues 1–22 (MKTSIRYALLAAALTAATPALA). 4 residues coordinate Fe cation: H31, E79, Y217, and Y218.

The protein belongs to the bacterial solute-binding protein 1 family.

It is found in the periplasm. In terms of biological role, this protein may be a central component in the iron-acquisition system. The protein is Major ferric iron-binding protein (fbpA) of Neisseria meningitidis serogroup B (strain ATCC BAA-335 / MC58).